The following is a 69-amino-acid chain: Chondroitin proteoglycan 9 (69 aa).

Residues 1–19 (MHLWQLVLLVILFFGAAFG) form the signal peptide. Residues S25 and S27 are each glycosylated (O-linked (Xyl...) (chondroitin sulfate) serine).

The sequence is that of Chondroitin proteoglycan 9 from Caenorhabditis elegans.